Here is a 339-residue protein sequence, read N- to C-terminus: Ribosomal RNA small subunit methyltransferase H (339 aa).

Residues 40 to 42 (GGY), Asp-58, Phe-85, Asp-106, and Gln-113 contribute to the S-adenosyl-L-methionine site.

Belongs to the methyltransferase superfamily. RsmH family.

The protein resides in the cytoplasm. It catalyses the reaction cytidine(1402) in 16S rRNA + S-adenosyl-L-methionine = N(4)-methylcytidine(1402) in 16S rRNA + S-adenosyl-L-homocysteine + H(+). Functionally, specifically methylates the N4 position of cytidine in position 1402 (C1402) of 16S rRNA. In Parvibaculum lavamentivorans (strain DS-1 / DSM 13023 / NCIMB 13966), this protein is Ribosomal RNA small subunit methyltransferase H.